The following is a 282-amino-acid chain: sn-glycerol-3-phosphate transport system permease protein UgpE (282 aa).

6 helical membrane passes run 14–34 (LILI…FVAS), 86–106 (MAIA…IVFF), 112–132 (MFFF…RILP), 146–168 (YAGL…QFFL), 201–221 (IAAL…WPLL), and 248–268 (WNYV…VVVL). The 192-residue stretch at 78-269 (LWNSFVVAMA…IPLILVVVLM (192 aa)) folds into the ABC transmembrane type-1 domain.

This sequence belongs to the binding-protein-dependent transport system permease family. As to quaternary structure, the complex is composed of two ATP-binding proteins (UgpC), two transmembrane proteins (UgpA and UgpE) and a solute-binding protein (UgpB).

Its subcellular location is the cell inner membrane. Part of the ABC transporter complex UgpBAEC involved in sn-glycerol-3-phosphate (G3P) import. Probably responsible for the translocation of the substrate across the membrane. In Brucella abortus (strain 2308), this protein is sn-glycerol-3-phosphate transport system permease protein UgpE (ugpE).